Reading from the N-terminus, the 176-residue chain is Interleukin-7 (176 aa).

A signal peptide spans 1-25; the sequence is MFHVSFRYIFGIPPLILVLLPVASS. 3 cysteine pairs are disulfide-bonded: Cys-27-Cys-165, Cys-58-Cys-153, and Cys-71-Cys-116. N-linked (GlcNAc...) asparagine glycans are attached at residues Asn-94, Asn-115, and Asn-140. The segment at 118–143 is disordered; that stretch reads SKGKGRKPPSLSEAQPTKNLEENKSS.

This sequence belongs to the IL-7/IL-9 family. Interacts with IL7R and CSF2RG.

The protein localises to the secreted. Its function is as follows. Hematopoietic cytokine that plays an essential role in the development, expansion, and survival of naive and memory T-cells and B-cells thereby regulating the number of mature lymphocytes and maintaining lymphoid homeostasis. Mechanistically, exerts its biological effects through a receptor composed of IL7RA subunit and the cytokine receptor common subunit gamma/CSF2RG. Binding to the receptor leads to activation of various kinases including JAK1 or JAK3 depending on the cell type and subsequently propagation of signals through activation of several downstream signaling pathways including the PI3K/Akt/mTOR or the JAK-STAT5. In Bos taurus (Bovine), this protein is Interleukin-7 (IL7).